A 57-amino-acid polypeptide reads, in one-letter code: UPF0337 protein SAV_1088 (57 aa).

Composition is skewed to basic and acidic residues over residues 1 to 15 (MAGD…EQAK) and 36 to 57 (QAEK…VFKH). The segment at 1–57 (MAGDQKAKAKMEQAKGKAKAAAGRAVGNERMAAEGQAEKSKGDARQAKEKTKDVFKH) is disordered.

Belongs to the UPF0337 (CsbD) family.

The sequence is that of UPF0337 protein SAV_1088 from Streptomyces avermitilis (strain ATCC 31267 / DSM 46492 / JCM 5070 / NBRC 14893 / NCIMB 12804 / NRRL 8165 / MA-4680).